The sequence spans 377 residues: MVSVNLPWELVEEILYRVPPQSLARFRTVCKQWNSLFDDNKFVNDHLVRSRPQFMFRTDSKMYSVAVNFSGPWIEVHELTLDIPGLNCEMPIWLYNYVDCDGLLFCTSYKFKGVLIWNPWLKQTRLFASNHHYPTKYVIGYDNKKRYKVLDYEFEPSSKLTIYEIGLYSKKVKDLESDSSWSVVQSNSVSLNGTLYWAGVDVNNGIFIRSFSFSTERLTTFCRLPLKYNEDNILALAVFRKDRFSLLKLCNKTSKIKIWLTKNSINNREIGLVEDVVWIKLMTVLIPDFPKLPFRWYNRPDLTYFLDNDDAKRLVICCYDETQQVYIYIVRRNIVKKIKIDLFEDLLDQSSPHLRTYIPSLVRPTQVKEDNNKLYVL.

The region spanning M1–H46 is the F-box domain.

The sequence is that of Putative F-box only protein 10 (FBX10) from Arabidopsis thaliana (Mouse-ear cress).